The following is a 608-amino-acid chain: Serine/threonine-protein kinase BUR1 (608 aa).

The region spanning 39-346 (YEIIQKLGQG…ALDALNHNYF (308 aa)) is the Protein kinase domain. ATP-binding positions include 45 to 53 (LGQGTFGVV) and Lys68. The Proton acceptor role is filled by Asp174. Disordered regions lie at residues 383 to 419 (HEANKIPKAHFPKGPGEYNNSNNYPRNRNGSFPLALP) and 443 to 571 (YIPK…FDED). The segment covering 400–411 (YNNSNNYPRNRN) has biased composition (low complexity). The span at 471–482 (LRDRSPRREGHI) shows a compositional bias: basic and acidic residues. Over residues 487-502 (STTNSNNISSNSSASN) the composition is skewed to low complexity. 2 stretches are compositionally biased toward polar residues: residues 503 to 512 (VGGTLSNPTH) and 539 to 548 (PQSSSRNVSD). The segment covering 559 to 571 (EQNESDLTDFDED) has biased composition (acidic residues).

Belongs to the protein kinase superfamily. CMGC Ser/Thr protein kinase family. CDC2/CDKX subfamily.

It localises to the nucleus. It catalyses the reaction L-seryl-[protein] + ATP = O-phospho-L-seryl-[protein] + ADP + H(+). It carries out the reaction L-threonyl-[protein] + ATP = O-phospho-L-threonyl-[protein] + ADP + H(+). The enzyme catalyses [DNA-directed RNA polymerase] + ATP = phospho-[DNA-directed RNA polymerase] + ADP + H(+). Serine/threonine-protein kinase involved in transcription regulation. Phosphorylates the UBC2/RAD6 ubiquitin-conjugating enzyme (E2), leading to monoubiquitination of histone H2B and the silencing of telomeric-associated genes. Also required for histone H3 methylation. Necessary for the recovery from pheromone-induced growth arrest in the cell cycle G1 phase. This is Serine/threonine-protein kinase BUR1 (BUR1) from Debaryomyces hansenii (strain ATCC 36239 / CBS 767 / BCRC 21394 / JCM 1990 / NBRC 0083 / IGC 2968) (Yeast).